The primary structure comprises 116 residues: MAGRSGGSDRELLTAVRIIKILYQSNPHPSPEGTRQARRNRRRRWRERQRQIHSISERILSTVLGRSSEPVPLQLPPLDRLTLDCSEDCGTSGTQGVGSPQILVESPAVLESGTKE.

2 positions are modified to phosphoserine; by host CK2: Ser-5 and Ser-8. Residues 18–26 (IIKILYQSN) form a homomultimerization region. The disordered stretch occupies residues 24 to 49 (QSNPHPSPEGTRQARRNRRRRWRERQ). The Nuclear localization signal and RNA-binding (RRE) motif lies at 34–50 (TRQARRNRRRRWRERQR). Over residues 36–47 (QARRNRRRRWRE) the composition is skewed to basic residues. A Nuclear export signal and binding to XPO1 motif is present at residues 73 to 84 (LQLPPLDRLTLD). 2 positions are modified to phosphoserine; by host: Ser-92 and Ser-99.

It belongs to the HIV-1 REV protein family. Homomultimer; when bound to the RRE. Multimeric assembly is essential for activity and may involve XPO1. Binds to human KPNB1, XPO1, TNPO1, RANBP5 and IPO7. Interacts with the viral Integrase. Interacts with human KHDRBS1. Interacts with human NAP1; this interaction decreases Rev multimerization and stimulates its activity. Interacts with human DEAD-box helicases DDX3 and DDX24; these interactions may serve for viral RNA export to the cytoplasm and packaging, respectively. Interacts with human PSIP1; this interaction may inhibit HIV-1 DNA integration by promoting dissociation of the Integrase-LEDGF/p75 complex. Post-translationally, asymmetrically arginine dimethylated at one site by host PRMT6. Methylation impairs the RNA-binding activity and export of viral RNA from the nucleus to the cytoplasm. Phosphorylated by protein kinase CK2. Presence of, and maybe binding to the N-terminus of the regulatory beta subunit of CK2 is necessary for CK2-mediated Rev's phosphorylation.

The protein resides in the host nucleus. Its subcellular location is the host nucleolus. The protein localises to the host cytoplasm. Its function is as follows. Escorts unspliced or incompletely spliced viral pre-mRNAs (late transcripts) out of the nucleus of infected cells. These pre-mRNAs carry a recognition sequence called Rev responsive element (RRE) located in the env gene, that is not present in fully spliced viral mRNAs (early transcripts). This function is essential since most viral proteins are translated from unspliced or partially spliced pre-mRNAs which cannot exit the nucleus by the pathway used by fully processed cellular mRNAs. Rev itself is translated from a fully spliced mRNA that readily exits the nucleus. Rev's nuclear localization signal (NLS) binds directly to KPNB1/Importin beta-1 without previous binding to KPNA1/Importin alpha-1. KPNB1 binds to the GDP bound form of RAN (Ran-GDP) and targets Rev to the nucleus. In the nucleus, the conversion from Ran-GDP to Ran-GTP dissociates Rev from KPNB1 and allows Rev's binding to the RRE in viral pre-mRNAs. Rev multimerization on the RRE via cooperative assembly exposes its nuclear export signal (NES) to the surface. Rev can then form a complex with XPO1/CRM1 and Ran-GTP, leading to nuclear export of the complex. Conversion from Ran-GTP to Ran-GDP mediates dissociation of the Rev/RRE/XPO1/RAN complex, so that Rev can return to the nucleus for a subsequent round of export. Beside KPNB1, also seems to interact with TNPO1/Transportin-1, RANBP5/IPO5 and IPO7/RANBP7 for nuclear import. The nucleoporin-like HRB/RIP is an essential cofactor that probably indirectly interacts with Rev to release HIV RNAs from the perinuclear region to the cytoplasm. The protein is Protein Rev of Human immunodeficiency virus type 1 group M subtype B (isolate SF33) (HIV-1).